A 374-amino-acid polypeptide reads, in one-letter code: Alginate lyase (374 aa).

Residues 1-23 form the signal peptide; that stretch reads MHKTRLALSCLLGSLLLSGAVHA. Substrate is bound by residues 62–63, 135–136, and Y253; these read SK and HT.

This sequence belongs to the polysaccharide lyase 5 family.

Its subcellular location is the periplasm. The enzyme catalyses Eliminative cleavage of alginate to give oligosaccharides with 4-deoxy-alpha-L-erythro-hex-4-enuronosyl groups at their non-reducing ends and beta-D-mannuronate at their reducing end.. Catalyzes the depolymerization of alginate by cleaving the beta-1,4 glycosidic bond between two adjacent sugar residues via a beta-elimination mechanism. May serve to degrade mislocalized alginate that is trapped in the periplasmic space. This chain is Alginate lyase, found in Azotobacter vinelandii (strain DJ / ATCC BAA-1303).